The primary structure comprises 94 residues: Large ribosomal subunit protein bL25 (94 aa).

The protein belongs to the bacterial ribosomal protein bL25 family. In terms of assembly, part of the 50S ribosomal subunit; part of the 5S rRNA/L5/L18/L25 subcomplex. Contacts the 5S rRNA. Binds to the 5S rRNA independently of L5 and L18.

Its function is as follows. This is one of the proteins that binds to the 5S RNA in the ribosome where it forms part of the central protuberance. This chain is Large ribosomal subunit protein bL25, found in Cronobacter sakazakii (strain ATCC BAA-894) (Enterobacter sakazakii).